Consider the following 173-residue polypeptide: MADFPGKVSTQTSSQEPQRSFAISSSVDMGFIKSIPGILLIAEIVVGLLVWTLIASTPHYLIPALGWVLFVSITLWLLSIALLVILLLSLHQRLPSVPWPLVLLVFYSVAALLYLTAFLANAATVPGGYYQGHLGASAFFGIVETLLYTASSYFAYLGWRGEGQNAAGSTVPV.

Over 1–34 the chain is Cytoplasmic; the sequence is MADFPGKVSTQTSSQEPQRSFAISSSVDMGFIKS. Residues 31-160 enclose the MARVEL domain; that stretch reads FIKSIPGILL…SSYFAYLGWR (130 aa). The chain crosses the membrane as a helical span at residues 35–55; that stretch reads IPGILLIAEIVVGLLVWTLIA. Residues 56–67 are Extracellular-facing; the sequence is STPHYLIPALGW. Residues 68–88 traverse the membrane as a helical segment; the sequence is VLFVSITLWLLSIALLVILLL. Topologically, residues 89 to 98 are cytoplasmic; the sequence is SLHQRLPSVP. A helical membrane pass occupies residues 99–119; sequence WPLVLLVFYSVAALLYLTAFL. Over 120-138 the chain is Extracellular; sequence ANAATVPGGYYQGHLGASA. The helical transmembrane segment at 139 to 159 threads the bilayer; the sequence is FFGIVETLLYTASSYFAYLGW. At 160–173 the chain is on the cytoplasmic side; it reads RGEGQNAAGSTVPV.

The protein belongs to the MAL family. In terms of assembly, forms oligomers. Expressed in the posterior midgut.

It is found in the cell membrane. The protein resides in the myelin membrane. It localises to the apical cell membrane. Its subcellular location is the recycling endosome membrane. The protein localises to the vesicle. Main component of the myelin sheath that plays an important role in myelin membrane biogenesis and myelination. Plays an essential function in apical endocytosis. Plays an important role by activating the Notch signaling pathway, which is essential for cell differentiation and results in correct patterning of the intestinal epithelium, particularly of the posterior gut absorptive cells. This chain is Plasmolipin (pllp), found in Danio rerio (Zebrafish).